We begin with the raw amino-acid sequence, 106 residues long: MADFLGMMKQAAQLQSKMQEMQDALGNVEVEGISGGGLVVVRMTAKMDVKGVKIDPSLMKAEEREVLEDLLVTALGDARRKAEAAVQEKMQSLTGGLGLPPGLFGQ.

The protein belongs to the YbaB/EbfC family. Homodimer.

Its subcellular location is the cytoplasm. The protein resides in the nucleoid. Binds to DNA and alters its conformation. May be involved in regulation of gene expression, nucleoid organization and DNA protection. The protein is Nucleoid-associated protein bll8115 of Bradyrhizobium diazoefficiens (strain JCM 10833 / BCRC 13528 / IAM 13628 / NBRC 14792 / USDA 110).